The sequence spans 104 residues: L-rhamnose mutarotase (104 aa).

Tyrosine 18 is a substrate binding site. Histidine 22 serves as the catalytic Proton donor. Substrate contacts are provided by residues tyrosine 41 and 76-77 (WW). Residues 85-104 (PSNPDNSPISDALDPVFYLD) are disordered.

It belongs to the rhamnose mutarotase family. In terms of assembly, homodimer.

The protein localises to the cytoplasm. It catalyses the reaction alpha-L-rhamnose = beta-L-rhamnose. It functions in the pathway carbohydrate metabolism; L-rhamnose metabolism. Involved in the anomeric conversion of L-rhamnose. This chain is L-rhamnose mutarotase, found in Pectobacterium atrosepticum (strain SCRI 1043 / ATCC BAA-672) (Erwinia carotovora subsp. atroseptica).